Reading from the N-terminus, the 495-residue chain is Sulfhydryl oxidase 2 (495 aa).

An N-terminal signal peptide occupies residues 1-15 (MSLVHLLLFAGLVIA). The Thioredoxin domain maps to 29-164 (EISDQKDKAV…LLNWINKQIG (136 aa)). Residue Asn-41 is glycosylated (N-linked (GlcNAc...) asparagine). Catalysis depends on nucleophile residues Cys-66 and Cys-69. A disulfide bond links Cys-66 and Cys-69. N-linked (GlcNAc...) asparagine glycosylation is found at Asn-182, Asn-257, Asn-266, and Asn-292. Cysteines 287 and 299 form a disulfide. Residues 290–392 (SKNDTRGFSC…GDPKFPKIIW (103 aa)) enclose the ERV/ALR sulfhydryl oxidase domain. FAD contacts are provided by residues Arg-295, Trp-302, His-306, Glu-336, His-340, 363–370 (WSTHNKVN), Lys-389, and Trp-392. Cys-334 and Cys-337 are disulfide-bonded. Cys-398 and Cys-401 are joined by a disulfide.

FAD serves as cofactor.

Its subcellular location is the secreted. The catalysed reaction is 2 R'C(R)SH + O2 = R'C(R)S-S(R)CR' + H2O2. In terms of biological role, catalyzes the oxidation of sulfhydryl groups in peptide and protein thiols to disulfides with the reduction of oxygen to hydrogen peroxide. May contribute to disulfide bond formation in a variety of secreted proteins. The chain is Sulfhydryl oxidase 2 (QSOX2) from Arabidopsis thaliana (Mouse-ear cress).